A 77-amino-acid chain; its full sequence is Teretoxin Tsu15.4 (77 aa).

Positions Met1–Asn21 are cleaved as a signal peptide. Positions Ser22–Arg40 are excised as a propeptide.

Contains 4 disulfide bonds. As to expression, expressed by the venom duct.

It is found in the secreted. This chain is Teretoxin Tsu15.4, found in Terebra subulata (Chocolate spotted auger).